The sequence spans 766 residues: Phosphoribosylformylglycinamidine synthase subunit PurL (766 aa).

The active site involves His-66. ATP-binding residues include Tyr-69 and Lys-113. Glu-115 contacts Mg(2+). Substrate is bound by residues 116 to 119 (SHNH) and Arg-138. The Proton acceptor role is filled by His-117. Asp-139 serves as a coordination point for Mg(2+). Gln-264 serves as a coordination point for substrate. Residue Asp-292 participates in Mg(2+) binding. 336 to 338 (ESQ) is a binding site for substrate. Positions 524 and 561 each coordinate ATP. Asn-562 is a Mg(2+) binding site. A substrate-binding site is contributed by Ser-564.

It belongs to the FGAMS family. In terms of assembly, monomer. Part of the FGAM synthase complex composed of 1 PurL, 1 PurQ and 2 PurS subunits.

It is found in the cytoplasm. It carries out the reaction N(2)-formyl-N(1)-(5-phospho-beta-D-ribosyl)glycinamide + L-glutamine + ATP + H2O = 2-formamido-N(1)-(5-O-phospho-beta-D-ribosyl)acetamidine + L-glutamate + ADP + phosphate + H(+). Its pathway is purine metabolism; IMP biosynthesis via de novo pathway; 5-amino-1-(5-phospho-D-ribosyl)imidazole from N(2)-formyl-N(1)-(5-phospho-D-ribosyl)glycinamide: step 1/2. In terms of biological role, part of the phosphoribosylformylglycinamidine synthase complex involved in the purines biosynthetic pathway. Catalyzes the ATP-dependent conversion of formylglycinamide ribonucleotide (FGAR) and glutamine to yield formylglycinamidine ribonucleotide (FGAM) and glutamate. The FGAM synthase complex is composed of three subunits. PurQ produces an ammonia molecule by converting glutamine to glutamate. PurL transfers the ammonia molecule to FGAR to form FGAM in an ATP-dependent manner. PurS interacts with PurQ and PurL and is thought to assist in the transfer of the ammonia molecule from PurQ to PurL. This is Phosphoribosylformylglycinamidine synthase subunit PurL from Mycobacterium tuberculosis (strain CDC 1551 / Oshkosh).